The chain runs to 66 residues: Beta-defensin 107A (66 aa).

A signal peptide spans 1–22 (MKIFFFIFAALFLLAQIFQART). Cystine bridges form between C37–C51 and C41–C60.

Belongs to the beta-defensin family.

It is found in the secreted. In terms of biological role, has antibacterial activity. This Gorilla gorilla gorilla (Western lowland gorilla) protein is Beta-defensin 107A (DEFB107A).